The sequence spans 361 residues: Phospho-N-acetylmuramoyl-pentapeptide-transferase (361 aa).

10 helical membrane-spanning segments follow: residues 25–45, 72–92, 95–115, 133–153, 169–189, 200–220, 240–260, 264–284, 289–309, and 338–358; these read TGGA…WIIN, TPTM…VLWA, VNPY…VGFY, TRLL…VWLG, VVLN…VGAG, GLAI…AYLA, LAVL…FNAP, IFMG…IAVA, IVLA…IVQV, and QIVI…LATL.

This sequence belongs to the glycosyltransferase 4 family. MraY subfamily. It depends on Mg(2+) as a cofactor.

The protein resides in the cell inner membrane. The enzyme catalyses UDP-N-acetyl-alpha-D-muramoyl-L-alanyl-gamma-D-glutamyl-meso-2,6-diaminopimeloyl-D-alanyl-D-alanine + di-trans,octa-cis-undecaprenyl phosphate = di-trans,octa-cis-undecaprenyl diphospho-N-acetyl-alpha-D-muramoyl-L-alanyl-D-glutamyl-meso-2,6-diaminopimeloyl-D-alanyl-D-alanine + UMP. It functions in the pathway cell wall biogenesis; peptidoglycan biosynthesis. Catalyzes the initial step of the lipid cycle reactions in the biosynthesis of the cell wall peptidoglycan: transfers peptidoglycan precursor phospho-MurNAc-pentapeptide from UDP-MurNAc-pentapeptide onto the lipid carrier undecaprenyl phosphate, yielding undecaprenyl-pyrophosphoryl-MurNAc-pentapeptide, known as lipid I. The sequence is that of Phospho-N-acetylmuramoyl-pentapeptide-transferase from Rhodopseudomonas palustris (strain BisB5).